Here is a 546-residue protein sequence, read N- to C-terminus: Mitochondrial distribution and morphology protein 34 (546 aa).

One can recognise an SMP-LTD domain in the interval 1-195 (MAFNFNWSPL…LPAIIHRLSL (195 aa)). Disordered regions lie at residues 208–230 (EVKA…QDPV), 299–319 (SHGG…SHVA), 344–382 (TMGA…CTDS), 395–416 (SSSA…SPDA), and 517–546 (RRIQ…AYGQ). Residues 349-362 (RHPRTRPSRKHKRR) are compositionally biased toward basic residues. Residues 363–374 (VVDLRKPQKLDD) are compositionally biased toward basic and acidic residues.

Belongs to the MDM34 family. Component of the ER-mitochondria encounter structure (ERMES) or MDM complex, composed of MMM1, MDM10, MDM12 and MDM34.

The protein resides in the mitochondrion outer membrane. Its function is as follows. Component of the ERMES/MDM complex, which serves as a molecular tether to connect the endoplasmic reticulum (ER) and mitochondria. Components of this complex are involved in the control of mitochondrial shape and protein biogenesis, and function in nonvesicular lipid trafficking between the ER and mitochondria. MDM34 is required for the interaction of the ER-resident membrane protein MMM1 and the outer mitochondrial membrane-resident beta-barrel protein MDM10. This is Mitochondrial distribution and morphology protein 34 from Arthroderma otae (strain ATCC MYA-4605 / CBS 113480) (Microsporum canis).